Reading from the N-terminus, the 334-residue chain is Small ribosomal subunit protein uS2 (334 aa).

Belongs to the universal ribosomal protein uS2 family.

The sequence is that of Small ribosomal subunit protein uS2 from Rhodopseudomonas palustris (strain BisB18).